The chain runs to 151 residues: uncharacterized protein (151 aa).

An N-terminal signal peptide occupies residues 1–32 (MEEAEKAKRRSIELLNETRNCAYSSFVALAEA). Residues 45–67 (AIGFAGGISGSGHICGALWGSIA) traverse the membrane as a helical segment.

It localises to the membrane. This is an uncharacterized protein from Archaeoglobus fulgidus (strain ATCC 49558 / DSM 4304 / JCM 9628 / NBRC 100126 / VC-16).